Here is a 156-residue protein sequence, read N- to C-terminus: 6,7-dimethyl-8-ribityllumazine synthase (156 aa).

5-amino-6-(D-ribitylamino)uracil contacts are provided by residues Phe-23, 57 to 59 (AFE), and 81 to 83 (AII). 86–87 (ST) is a binding site for (2S)-2-hydroxy-3-oxobutyl phosphate. His-89 (proton donor) is an active-site residue. Phe-114 is a 5-amino-6-(D-ribitylamino)uracil binding site. (2S)-2-hydroxy-3-oxobutyl phosphate is bound at residue Arg-128.

This sequence belongs to the DMRL synthase family.

It catalyses the reaction (2S)-2-hydroxy-3-oxobutyl phosphate + 5-amino-6-(D-ribitylamino)uracil = 6,7-dimethyl-8-(1-D-ribityl)lumazine + phosphate + 2 H2O + H(+). Its pathway is cofactor biosynthesis; riboflavin biosynthesis; riboflavin from 2-hydroxy-3-oxobutyl phosphate and 5-amino-6-(D-ribitylamino)uracil: step 1/2. Catalyzes the formation of 6,7-dimethyl-8-ribityllumazine by condensation of 5-amino-6-(D-ribitylamino)uracil with 3,4-dihydroxy-2-butanone 4-phosphate. This is the penultimate step in the biosynthesis of riboflavin. The protein is 6,7-dimethyl-8-ribityllumazine synthase of Wolinella succinogenes (strain ATCC 29543 / DSM 1740 / CCUG 13145 / JCM 31913 / LMG 7466 / NCTC 11488 / FDC 602W) (Vibrio succinogenes).